Reading from the N-terminus, the 207-residue chain is Intraflagellar transport protein 43 homolog A (207 aa).

A disordered region spans residues 1–104 (MDDNLQLGDS…GSDDEGDIPV (104 aa)).

It belongs to the IFT43 family. Component of IFT complex A.

Component of IFT complex A (IFT-A) involved in retrograde ciliary transport along microtubules from the ciliary tip to the base. This chain is Intraflagellar transport protein 43 homolog A (ift43a), found in Salmo salar (Atlantic salmon).